Reading from the N-terminus, the 196-residue chain is GTP cyclohydrolase-2 (196 aa).

GTP is bound at residue arginine 49–glutamate 53. Zn(2+) contacts are provided by cysteine 54, cysteine 65, and cysteine 67. GTP contacts are provided by residues glutamine 70, glutamate 92–arginine 94, and threonine 114. The Proton acceptor role is filled by aspartate 126. The active-site Nucleophile is the arginine 128. Residues threonine 149 and lysine 154 each coordinate GTP.

Belongs to the GTP cyclohydrolase II family. As to quaternary structure, homodimer. It depends on Zn(2+) as a cofactor.

It catalyses the reaction GTP + 4 H2O = 2,5-diamino-6-hydroxy-4-(5-phosphoribosylamino)-pyrimidine + formate + 2 phosphate + 3 H(+). The protein operates within cofactor biosynthesis; riboflavin biosynthesis; 5-amino-6-(D-ribitylamino)uracil from GTP: step 1/4. In terms of biological role, catalyzes the conversion of GTP to 2,5-diamino-6-ribosylamino-4(3H)-pyrimidinone 5'-phosphate (DARP), formate and pyrophosphate. This is GTP cyclohydrolase-2 from Escherichia coli O127:H6 (strain E2348/69 / EPEC).